A 152-amino-acid chain; its full sequence is Histone H2B.1 (152 aa).

Basic and acidic residues predominate over residues 1 to 28 (MAPKAEKKPAAKKPAEEEPAAEKAEKTP). Residues 1-60 (MAPKAEKKPAAKKPAEEEPAAEKAEKTPAGKKPKAEKRLPAGKSAAKEGGDKKGKKKAKK) are disordered. Lys7 and Lys37 each carry N6-acetyllysine. Lys148 participates in a covalent cross-link: Glycyl lysine isopeptide (Lys-Gly) (interchain with G-Cter in ubiquitin).

Belongs to the histone H2B family. As to quaternary structure, the nucleosome is a histone octamer containing two molecules each of H2A, H2B, H3 and H4 assembled in one H3-H4 heterotetramer and two H2A-H2B heterodimers. The octamer wraps approximately 147 bp of DNA. Can be acetylated to form H2BK6ac and H2BK33ac. In terms of processing, monoubiquitinated to form H2BK143ub1; may give a specific tag for epigenetic transcriptional activation.

The protein resides in the nucleus. It localises to the chromosome. Functionally, core component of nucleosome. Nucleosomes wrap and compact DNA into chromatin, limiting DNA accessibility to the cellular machineries which require DNA as a template. Histones thereby play a central role in transcription regulation, DNA repair, DNA replication and chromosomal stability. DNA accessibility is regulated via a complex set of post-translational modifications of histones, also called histone code, and nucleosome remodeling. The sequence is that of Histone H2B.1 from Triticum aestivum (Wheat).